A 440-amino-acid chain; its full sequence is Transposon Ty1-PR3 Gag polyprotein (440 aa).

3 stretches are compositionally biased toward polar residues: residues 1–23 (MESQQLSNYSPISHGSACASVTS), 48–60 (TKANSQQTTTPAS), and 127–152 (QSQFPQYPSSVGTPLSTPSPESGNTF). 3 disordered regions span residues 1 to 93 (MESQ…MMTQ), 126 to 173 (PQSQ…RPPP), and 352 to 440 (GSRN…PGTY). Residues 153 to 165 (TDSSSADSDMTST) show a composition bias toward low complexity. An RNA-binding region spans residues 299–401 (NNGIHINNKV…NSKSKTARAH (103 aa)). The segment covering 402 to 418 (NVSTSNNSPSTDNDSIS) has biased composition (low complexity). The residue at position 416 (Ser-416) is a Phosphoserine. Residues 419-428 (KSTTEPIQLN) show a composition bias toward polar residues. Over residues 429–440 (NKHDLHLRPGTY) the composition is skewed to basic and acidic residues.

Homotrimer.

The protein localises to the cytoplasm. Functionally, capsid protein (CA) is the structural component of the virus-like particle (VLP), forming the shell that encapsulates the retrotransposons dimeric RNA genome. The particles are assembled from trimer-clustered units and there are holes in the capsid shells that allow for the diffusion of macromolecules. CA also has nucleocapsid-like chaperone activity, promoting primer tRNA(i)-Met annealing to the multipartite primer-binding site (PBS), dimerization of Ty1 RNA and initiation of reverse transcription. The protein is Transposon Ty1-PR3 Gag polyprotein (TY1A-PR3) of Saccharomyces cerevisiae (strain ATCC 204508 / S288c) (Baker's yeast).